Reading from the N-terminus, the 226-residue chain is NAD(P)H-hydrate epimerase (226 aa).

The YjeF N-terminal domain maps to 10–215; it reads AIELDLDLFE…ALQRKYQLNL (206 aa). 58-62 lines the (6S)-NADPHX pocket; that stretch reads NNGGD. Residues asparagine 59 and aspartate 123 each coordinate K(+). Residues 127-133 and aspartate 156 contribute to the (6S)-NADPHX site; that span reads GFGFKPP. Serine 159 provides a ligand contact to K(+).

Belongs to the NnrE/AIBP family. K(+) serves as cofactor.

It carries out the reaction (6R)-NADHX = (6S)-NADHX. The catalysed reaction is (6R)-NADPHX = (6S)-NADPHX. Functionally, catalyzes the epimerization of the S- and R-forms of NAD(P)HX, a damaged form of NAD(P)H that is a result of enzymatic or heat-dependent hydration. This is a prerequisite for the S-specific NAD(P)H-hydrate dehydratase to allow the repair of both epimers of NAD(P)HX. This is NAD(P)H-hydrate epimerase from Drosophila pseudoobscura pseudoobscura (Fruit fly).